The primary structure comprises 417 residues: Serine hydroxymethyltransferase (417 aa).

(6S)-5,6,7,8-tetrahydrofolate contacts are provided by residues leucine 121 and 125–127; that span reads GHL. Lysine 229 bears the N6-(pyridoxal phosphate)lysine mark. Residue 355-357 coordinates (6S)-5,6,7,8-tetrahydrofolate; that stretch reads SPF.

It belongs to the SHMT family. Homodimer. It depends on pyridoxal 5'-phosphate as a cofactor.

The protein localises to the cytoplasm. It carries out the reaction (6R)-5,10-methylene-5,6,7,8-tetrahydrofolate + glycine + H2O = (6S)-5,6,7,8-tetrahydrofolate + L-serine. It participates in one-carbon metabolism; tetrahydrofolate interconversion. The protein operates within amino-acid biosynthesis; glycine biosynthesis; glycine from L-serine: step 1/1. Catalyzes the reversible interconversion of serine and glycine with tetrahydrofolate (THF) serving as the one-carbon carrier. This reaction serves as the major source of one-carbon groups required for the biosynthesis of purines, thymidylate, methionine, and other important biomolecules. Also exhibits THF-independent aldolase activity toward beta-hydroxyamino acids, producing glycine and aldehydes, via a retro-aldol mechanism. The polypeptide is Serine hydroxymethyltransferase (Salmonella arizonae (strain ATCC BAA-731 / CDC346-86 / RSK2980)).